A 704-amino-acid polypeptide reads, in one-letter code: UvrABC system protein B (704 aa).

In terms of domain architecture, Helicase ATP-binding spans 35 to 188 (ERINNGEKDV…DDLLRKFVSM (154 aa)). 48–55 (GATGTGKS) serves as a coordination point for ATP. Positions 101–124 (YYDYYQPEAYVAQTDTFIEKDSSI) match the Beta-hairpin motif. One can recognise a Helicase C-terminal domain in the interval 438-604 (QIDDLLGEIR…PLRKKIADIT (167 aa)). The region spanning 659-694 (VGMIAQLTEQMHGAAAELQFEVAARIRDEVSELKKE) is the UVR domain.

This sequence belongs to the UvrB family. In terms of assembly, forms a heterotetramer with UvrA during the search for lesions. Interacts with UvrC in an incision complex.

The protein resides in the cytoplasm. In terms of biological role, the UvrABC repair system catalyzes the recognition and processing of DNA lesions. A damage recognition complex composed of 2 UvrA and 2 UvrB subunits scans DNA for abnormalities. Upon binding of the UvrA(2)B(2) complex to a putative damaged site, the DNA wraps around one UvrB monomer. DNA wrap is dependent on ATP binding by UvrB and probably causes local melting of the DNA helix, facilitating insertion of UvrB beta-hairpin between the DNA strands. Then UvrB probes one DNA strand for the presence of a lesion. If a lesion is found the UvrA subunits dissociate and the UvrB-DNA preincision complex is formed. This complex is subsequently bound by UvrC and the second UvrB is released. If no lesion is found, the DNA wraps around the other UvrB subunit that will check the other stand for damage. The polypeptide is UvrABC system protein B (Pseudarthrobacter chlorophenolicus (strain ATCC 700700 / DSM 12829 / CIP 107037 / JCM 12360 / KCTC 9906 / NCIMB 13794 / A6) (Arthrobacter chlorophenolicus)).